Here is a 147-residue protein sequence, read N- to C-terminus: NADH-quinone oxidoreductase subunit A (147 aa).

The next 3 membrane-spanning stretches (helical) occupy residues 13-33, 70-90, and 104-124; these read LFSY…LGAV, YLVA…FSWA, and VVVF…WGAL.

It belongs to the complex I subunit 3 family. As to quaternary structure, NDH-1 is composed of 14 different subunits. Subunits NuoA, H, J, K, L, M, N constitute the membrane sector of the complex.

The protein localises to the cell inner membrane. The enzyme catalyses a quinone + NADH + 5 H(+)(in) = a quinol + NAD(+) + 4 H(+)(out). Its function is as follows. NDH-1 shuttles electrons from NADH, via FMN and iron-sulfur (Fe-S) centers, to quinones in the respiratory chain. The immediate electron acceptor for the enzyme in this species is believed to be ubiquinone. Couples the redox reaction to proton translocation (for every two electrons transferred, four hydrogen ions are translocated across the cytoplasmic membrane), and thus conserves the redox energy in a proton gradient. This chain is NADH-quinone oxidoreductase subunit A, found in Gluconacetobacter diazotrophicus (strain ATCC 49037 / DSM 5601 / CCUG 37298 / CIP 103539 / LMG 7603 / PAl5).